We begin with the raw amino-acid sequence, 450 residues long: Glucose-6-phosphate isomerase (450 aa).

Catalysis depends on glutamate 290, which acts as the Proton donor. Catalysis depends on residues histidine 311 and lysine 425.

This sequence belongs to the GPI family.

It localises to the cytoplasm. It catalyses the reaction alpha-D-glucose 6-phosphate = beta-D-fructose 6-phosphate. It participates in carbohydrate biosynthesis; gluconeogenesis. Its pathway is carbohydrate degradation; glycolysis; D-glyceraldehyde 3-phosphate and glycerone phosphate from D-glucose: step 2/4. In terms of biological role, catalyzes the reversible isomerization of glucose-6-phosphate to fructose-6-phosphate. The polypeptide is Glucose-6-phosphate isomerase (Lactiplantibacillus plantarum (strain ATCC BAA-793 / NCIMB 8826 / WCFS1) (Lactobacillus plantarum)).